A 492-amino-acid polypeptide reads, in one-letter code: UDP-N-acetylmuramoyl-L-alanyl-D-glutamate--2,6-diaminopimelate ligase (492 aa).

UDP-N-acetyl-alpha-D-muramoyl-L-alanyl-D-glutamate is bound at residue S21. 98 to 104 (GTNGKSS) lines the ATP pocket. UDP-N-acetyl-alpha-D-muramoyl-L-alanyl-D-glutamate contacts are provided by residues 144-145 (TT), S171, Q177, and R179. An N6-carboxylysine modification is found at K211. Meso-2,6-diaminopimelate is bound by residues R372, 396 to 399 (DNPR), G446, and E450. The Meso-diaminopimelate recognition motif signature appears at 396-399 (DNPR).

It belongs to the MurCDEF family. MurE subfamily. The cofactor is Mg(2+). Post-translationally, carboxylation is probably crucial for Mg(2+) binding and, consequently, for the gamma-phosphate positioning of ATP.

Its subcellular location is the cytoplasm. It catalyses the reaction UDP-N-acetyl-alpha-D-muramoyl-L-alanyl-D-glutamate + meso-2,6-diaminopimelate + ATP = UDP-N-acetyl-alpha-D-muramoyl-L-alanyl-gamma-D-glutamyl-meso-2,6-diaminopimelate + ADP + phosphate + H(+). The protein operates within cell wall biogenesis; peptidoglycan biosynthesis. Catalyzes the addition of meso-diaminopimelic acid to the nucleotide precursor UDP-N-acetylmuramoyl-L-alanyl-D-glutamate (UMAG) in the biosynthesis of bacterial cell-wall peptidoglycan. The polypeptide is UDP-N-acetylmuramoyl-L-alanyl-D-glutamate--2,6-diaminopimelate ligase (Rickettsia typhi (strain ATCC VR-144 / Wilmington)).